Consider the following 444-residue polypeptide: Deoxyguanosinetriphosphate triphosphohydrolase-like protein (444 aa).

The interval methionine 1–glutamine 26 is disordered. One can recognise an HD domain in the interval arginine 59–alanine 250.

It belongs to the dGTPase family. Type 2 subfamily.

The polypeptide is Deoxyguanosinetriphosphate triphosphohydrolase-like protein (Shewanella sediminis (strain HAW-EB3)).